We begin with the raw amino-acid sequence, 185 residues long: Ribosome-recycling factor (185 aa).

It belongs to the RRF family.

It is found in the cytoplasm. Functionally, responsible for the release of ribosomes from messenger RNA at the termination of protein biosynthesis. May increase the efficiency of translation by recycling ribosomes from one round of translation to another. This chain is Ribosome-recycling factor, found in Shouchella clausii (strain KSM-K16) (Alkalihalobacillus clausii).